Here is a 270-residue protein sequence, read N- to C-terminus: Myelin protein zero-like protein 1 (270 aa).

The N-terminal stretch at 1 to 35 (MAEAVGAVALIAAPARRRWLWSVLAAMLGLLTARI) is a signal peptide. In terms of domain architecture, Ig-like V-type spans 36 to 151 (SALEVHTPKE…DIVVRPGHIR (116 aa)). Residues 36–162 (SALEVHTPKE…HVVEIDNLLV (127 aa)) are Extracellular-facing. N-linked (GlcNAc...) asparagine glycans are attached at residues N50 and N130. An intrachain disulfide couples C58 to C135. Residues 163 to 183 (FLVWVVVGTVTAVVLGLTLLI) form a helical membrane-spanning segment. Over 184–270 (SLVLVVLYRR…SVVYADIRKD (87 aa)) the chain is Cytoplasmic. Positions 201 to 257 (TGCSTSERLSPVKQAPRKCPSDTEGLVKSPPSAGSHQGPVIYAQLDHSGGHHSGKIN) are disordered. S204, S206, S210, and S221 each carry phosphoserine. Residues 240–245 (VIYAQL) carry the ITIM motif 1 motif. Residue Y242 is modified to Phosphotyrosine. A Phosphoserine modification is found at S261. Residues 262-267 (VVYADI) carry the ITIM motif 2 motif. A Phosphotyrosine modification is found at Y264.

It belongs to the myelin P0 protein family. Interacts with phosphorylated PTPN11/SHP-2. Phosphorylated on tyrosine residues upon stimulation with pervanadate and concanavalin-A (ConA). Phosphorylation at Tyr-242 and Tyr-264 is required for interaction with PTPN11/SHP-2. Dephosphorylated by PTPN11/SHP-2 (in vitro).

The protein resides in the membrane. In terms of biological role, cell surface receptor, which is involved in signal transduction processes. Recruits PTPN11/SHP-2 to the cell membrane and is a putative substrate of PTPN11/SHP-2. Is a major receptor for concanavalin-A (ConA) and is involved in cellular signaling induced by ConA, which probably includes Src family tyrosine-protein kinases. Isoform 2 seems to have a dominant negative role; it blocks tyrosine phosphorylation of MPZL1 induced by ConA. Isoform 1, but not isoform 2, may be involved in regulation of integrin-mediated cell motility. The chain is Myelin protein zero-like protein 1 (Mpzl1) from Mus musculus (Mouse).